A 467-amino-acid polypeptide reads, in one-letter code: Nodulation protein T (467 aa).

A signal peptide spans methionine 1–glycine 17. Cysteine 18 is lipidated: N-palmitoyl cysteine. A lipid anchor (S-diacylglycerol cysteine) is attached at cysteine 18.

The protein belongs to the outer membrane factor (OMF) (TC 1.B.17) family.

The protein localises to the cell membrane. This chain is Nodulation protein T (nodT), found in Rhizobium leguminosarum bv. trifolii.